Consider the following 491-residue polypeptide: Acetyl-coenzyme A carboxylase carboxyl transferase subunit beta, chloroplastic (491 aa).

In terms of domain architecture, CoA carboxyltransferase N-terminal spans Leu-229–Thr-491. Residues Cys-233, Cys-236, Cys-252, and Cys-255 each coordinate Zn(2+). The C4-type zinc-finger motif lies at Cys-233–Cys-255.

This sequence belongs to the AccD/PCCB family. As to quaternary structure, acetyl-CoA carboxylase is a heterohexamer composed of biotin carboxyl carrier protein, biotin carboxylase and 2 subunits each of ACCase subunit alpha and ACCase plastid-coded subunit beta (accD). Zn(2+) serves as cofactor.

It is found in the plastid. The protein localises to the chloroplast stroma. It carries out the reaction N(6)-carboxybiotinyl-L-lysyl-[protein] + acetyl-CoA = N(6)-biotinyl-L-lysyl-[protein] + malonyl-CoA. Its pathway is lipid metabolism; malonyl-CoA biosynthesis; malonyl-CoA from acetyl-CoA: step 1/1. Component of the acetyl coenzyme A carboxylase (ACC) complex. Biotin carboxylase (BC) catalyzes the carboxylation of biotin on its carrier protein (BCCP) and then the CO(2) group is transferred by the transcarboxylase to acetyl-CoA to form malonyl-CoA. This Lemna minor (Common duckweed) protein is Acetyl-coenzyme A carboxylase carboxyl transferase subunit beta, chloroplastic.